A 280-amino-acid polypeptide reads, in one-letter code: Dermonecrotic toxin LsSicTox-alphaIA1 (280 aa).

His12 is a catalytic residue. The Mg(2+) site is built by Glu32 and Asp34. His48 (nucleophile) is an active-site residue. 2 disulfides stabilise this stretch: Cys52/Cys58 and Cys54/Cys197. Residue Asp92 participates in Mg(2+) binding.

Belongs to the arthropod phospholipase D family. Class II subfamily. It depends on Mg(2+) as a cofactor. As to expression, expressed by the venom gland.

It is found in the secreted. It catalyses the reaction an N-(acyl)-sphingosylphosphocholine = an N-(acyl)-sphingosyl-1,3-cyclic phosphate + choline. The enzyme catalyses an N-(acyl)-sphingosylphosphoethanolamine = an N-(acyl)-sphingosyl-1,3-cyclic phosphate + ethanolamine. It carries out the reaction a 1-acyl-sn-glycero-3-phosphocholine = a 1-acyl-sn-glycero-2,3-cyclic phosphate + choline. The catalysed reaction is a 1-acyl-sn-glycero-3-phosphoethanolamine = a 1-acyl-sn-glycero-2,3-cyclic phosphate + ethanolamine. In terms of biological role, dermonecrotic toxins cleave the phosphodiester linkage between the phosphate and headgroup of certain phospholipids (sphingolipid and lysolipid substrates), forming an alcohol (often choline) and a cyclic phosphate. This toxin acts on sphingomyelin (SM). It may also act on ceramide phosphoethanolamine (CPE), lysophosphatidylcholine (LPC) and lysophosphatidylethanolamine (LPE), but not on lysophosphatidylserine (LPS), and lysophosphatidylglycerol (LPG). It acts by transphosphatidylation, releasing exclusively cyclic phosphate products as second products. Induces dermonecrosis, hemolysis, increased vascular permeability, edema, inflammatory response, and platelet aggregation. The chain is Dermonecrotic toxin LsSicTox-alphaIA1 from Loxosceles similis (Brazilian brown spider).